We begin with the raw amino-acid sequence, 691 residues long: Guanylate cyclase soluble subunit alpha-1 (691 aa).

The segment at 26-65 is disordered; it reads PREPLGEATGSGPASTPGQPGVCPGVPDKNPPGRLPRRKT. The Guanylate cyclase domain occupies 482 to 609; it reads TMLFSDIVGF…NNVTLANKFE (128 aa).

The protein belongs to the adenylyl cyclase class-4/guanylyl cyclase family. In terms of assembly, heterodimer of an alpha and a beta chain.

The protein localises to the cytoplasm. It catalyses the reaction GTP = 3',5'-cyclic GMP + diphosphate. Activated by nitric oxide in the presence of magnesium or manganese ions. In Bos taurus (Bovine), this protein is Guanylate cyclase soluble subunit alpha-1 (GUCY1A1).